We begin with the raw amino-acid sequence, 5218 residues long: HC-toxin synthetase (5218 aa).

Positions 223–620 (SARAHEQDAN…VGRSDTQIKL (398 aa)) are adenylation 1. Residues 769-843 (MNDDSLLLTA…TAASCIKSAQ (75 aa)) form the Carrier 1 domain. Position 803 is an O-(pantetheine 4'-phosphoryl)serine (S803). A condensation 1 region spans residues 858-1154 (IPVSPIQKLF…GWFTTISPVY (297 aa)). An epimerization region spans residues 1338 to 1806 (EGVYPGSPMQ…LPIVSEHDTA (469 aa)). The tract at residues 1828-2233 (SRKVVEHPQR…IGRKDTQVKM (406 aa)) is adenylation 2. In terms of domain architecture, Carrier 2 spans 2379 to 2453 (ETTDTVEDRL…DMAKLFSHGQ (75 aa)). S2414 bears the O-(pantetheine 4'-phosphoryl)serine mark. Positions 2531–2929 (EDVFPCTPMQ…MEQFGHNLQT (399 aa)) are condensation 2. The segment at 2979–3386 (LEETAQSQPA…GRKDGQIKLR (408 aa)) is adenylation 3. Residues 3532-3608 (QVLTTNESVL…DMAGQISFVQ (77 aa)) form the Carrier 3 domain. S3569 carries the post-translational modification O-(pantetheine 4'-phosphoryl)serine. Residues 3649-4102 (EDVYPCTPLQ…PALSEAHLAE (454 aa)) form a condensation 3 region. Residues 4134 to 4530 (RRAQQSPNSQ…NLYYVRRKDS (397 aa)) are adenylation 4. The 75-residue stretch at 4666-4740 (THTQKLLRQL…AMSSLIDEHN (75 aa)) folds into the Carrier 4 domain. The residue at position 4701 (S4701) is an O-(pantetheine 4'-phosphoryl)serine. The segment at 4785 to 5101 (TLPCTEYQQM…SAIREFIPQA (317 aa)) is condensation 4.

This sequence belongs to the NRP synthetase family. It depends on pantetheine 4'-phosphate as a cofactor.

Its pathway is mycotoxin biosynthesis; HC-toxin biosynthesis. In terms of biological role, non-ribosomal peptide synthetase, part of the diffuse TOX2 gene cluster that mediates the biosynthesis of the HC-toxin, cyclic tetrapeptide of structure cyclo(D-Pro-L-Ala-D-Ala-L-Aeo), where Aeo stands for 2-amino-9,10-epoxi-8-oxodecanoic acid. HC-toxin is a determinant of specificity and virulence in the interaction between the producing fungus and its host, maize. HTS1, contains four modules, one for each amino acid in HC-toxin, with the order of activation being most likely Pro, Ala, Ala, and Aeo. In addition, HTS1 has one epimerase domain between modules 1 and 2, which is responsible for epimerizing L-Pro to D-Pro. The absence of an epimerizing domain after module 3, for producing D-Ala, can be explained by the presence in the cluster of TOXG, an Ala racemase, which produces D-Ala for incorporation by HTS1 into HC-toxin. This is HC-toxin synthetase from Cochliobolus carbonum (Maize leaf spot fungus).